Here is a 123-residue protein sequence, read N- to C-terminus: Ribonuclease P protein component (123 aa).

This sequence belongs to the RnpA family. As to quaternary structure, consists of a catalytic RNA component (M1 or rnpB) and a protein subunit.

It carries out the reaction Endonucleolytic cleavage of RNA, removing 5'-extranucleotides from tRNA precursor.. In terms of biological role, RNaseP catalyzes the removal of the 5'-leader sequence from pre-tRNA to produce the mature 5'-terminus. It can also cleave other RNA substrates such as 4.5S RNA. The protein component plays an auxiliary but essential role in vivo by binding to the 5'-leader sequence and broadening the substrate specificity of the ribozyme. The protein is Ribonuclease P protein component of Streptococcus pneumoniae (strain Hungary19A-6).